Consider the following 348-residue polypeptide: Methylthioribose-1-phosphate isomerase (348 aa).

Substrate contacts are provided by residues 51 to 53, arginine 94, and glutamine 199; that span reads RGA. Aspartate 240 functions as the Proton donor in the catalytic mechanism. 250-251 contributes to the substrate binding site; sequence NK.

It belongs to the eIF-2B alpha/beta/delta subunits family. MtnA subfamily.

The enzyme catalyses 5-(methylsulfanyl)-alpha-D-ribose 1-phosphate = 5-(methylsulfanyl)-D-ribulose 1-phosphate. It participates in amino-acid biosynthesis; L-methionine biosynthesis via salvage pathway; L-methionine from S-methyl-5-thio-alpha-D-ribose 1-phosphate: step 1/6. Catalyzes the interconversion of methylthioribose-1-phosphate (MTR-1-P) into methylthioribulose-1-phosphate (MTRu-1-P). The chain is Methylthioribose-1-phosphate isomerase from Nitrosococcus oceani (strain ATCC 19707 / BCRC 17464 / JCM 30415 / NCIMB 11848 / C-107).